Here is a 352-residue protein sequence, read N- to C-terminus: MSKITVKSPGRVNLIGEHTDYTYGYVMPMAIDLYTIITAEKYDKVQLYSEHFNEEKTFTLDNLTKEGSWIDYVKGVLWVLIQEGYKIGGLKGKITGDLPLGAGLSSSASFEVGILEVLNQLYNLNIDPLKKALLAKKAENEFVGVPCGILDQFAVVFGKKDNVIFLDTQTLQYEYIPFPKDVSVLVFYTGVKRELASSEYAERKRIAEESLRILGKESSKEVTEKDLGKLPPLHRKFFSYIVRENARVLEVRDALKEGDIEKVGKILTTAHWDLAENYRVSCEELDFFVKKAMELGAYGARLTGAGFGGSAIALVDKDKAKTIGDAILREYLAKFSWKAKYFVVKPSDGVGV.

Residue 17-20 (EHTD) coordinates substrate. ATP-binding positions include Ser49 and 101-107 (GAGLSSS). Mg(2+) contacts are provided by Ser107 and Glu139. Asp151 (proton acceptor) is an active-site residue. A substrate-binding site is contributed by Tyr200.

It belongs to the GHMP kinase family. GalK subfamily. In terms of assembly, monomer.

It localises to the cytoplasm. The catalysed reaction is alpha-D-galactose + ATP = alpha-D-galactose 1-phosphate + ADP + H(+). It functions in the pathway carbohydrate metabolism; galactose metabolism. Its function is as follows. Catalyzes the transfer of the gamma-phosphate of ATP to D-galactose to form alpha-D-galactose-1-phosphate (Gal-1-P). Is very specific for its substrate, since it is not able to use D-glucose, D-fructose, D-mannose, 2-deoxy-D-glucose, and D-glucosamine as substrates. This Pyrococcus furiosus (strain ATCC 43587 / DSM 3638 / JCM 8422 / Vc1) protein is Galactokinase.